Reading from the N-terminus, the 368-residue chain is Histidinol-phosphate aminotransferase (368 aa).

Position 229 is an N6-(pyridoxal phosphate)lysine (K229).

Belongs to the class-II pyridoxal-phosphate-dependent aminotransferase family. Histidinol-phosphate aminotransferase subfamily. As to quaternary structure, homodimer. The cofactor is pyridoxal 5'-phosphate.

The enzyme catalyses L-histidinol phosphate + 2-oxoglutarate = 3-(imidazol-4-yl)-2-oxopropyl phosphate + L-glutamate. The protein operates within amino-acid biosynthesis; L-histidine biosynthesis; L-histidine from 5-phospho-alpha-D-ribose 1-diphosphate: step 7/9. The protein is Histidinol-phosphate aminotransferase of Acidovorax sp. (strain JS42).